A 601-amino-acid chain; its full sequence is NADH-quinone oxidoreductase subunit C/D (601 aa).

Residues M1–E192 form an NADH dehydrogenase I subunit C region. An NADH dehydrogenase I subunit D region spans residues D216–R601.

The protein in the N-terminal section; belongs to the complex I 30 kDa subunit family. In the C-terminal section; belongs to the complex I 49 kDa subunit family. NDH-1 is composed of 13 different subunits. Subunits NuoB, CD, E, F, and G constitute the peripheral sector of the complex.

Its subcellular location is the cell inner membrane. The enzyme catalyses a quinone + NADH + 5 H(+)(in) = a quinol + NAD(+) + 4 H(+)(out). NDH-1 shuttles electrons from NADH, via FMN and iron-sulfur (Fe-S) centers, to quinones in the respiratory chain. The immediate electron acceptor for the enzyme in this species is believed to be ubiquinone. Couples the redox reaction to proton translocation (for every two electrons transferred, four hydrogen ions are translocated across the cytoplasmic membrane), and thus conserves the redox energy in a proton gradient. The chain is NADH-quinone oxidoreductase subunit C/D from Gluconacetobacter diazotrophicus (strain ATCC 49037 / DSM 5601 / CCUG 37298 / CIP 103539 / LMG 7603 / PAl5).